The following is a 124-amino-acid chain: Small ribosomal subunit protein uS12 (124 aa).

Asp-89 is modified (3-methylthioaspartic acid).

It belongs to the universal ribosomal protein uS12 family. In terms of assembly, part of the 30S ribosomal subunit. Contacts proteins S8 and S17. May interact with IF1 in the 30S initiation complex.

Functionally, with S4 and S5 plays an important role in translational accuracy. Interacts with and stabilizes bases of the 16S rRNA that are involved in tRNA selection in the A site and with the mRNA backbone. Located at the interface of the 30S and 50S subunits, it traverses the body of the 30S subunit contacting proteins on the other side and probably holding the rRNA structure together. The combined cluster of proteins S8, S12 and S17 appears to hold together the shoulder and platform of the 30S subunit. The polypeptide is Small ribosomal subunit protein uS12 (Mannheimia succiniciproducens (strain KCTC 0769BP / MBEL55E)).